The chain runs to 74 residues: Salivary glue protein Sgs-7 (74 aa).

An N-terminal signal peptide occupies residues 1 to 23; the sequence is MKLIAVTIIACILLIGFSDLALG.

This is Salivary glue protein Sgs-7 (Sgs7) from Drosophila melanogaster (Fruit fly).